The chain runs to 455 residues: Deoxyribodipyrimidine photo-lyase (455 aa).

In terms of domain architecture, Photolyase/cryptochrome alpha/beta spans 2–131; the sequence is SVAVVLFTSD…ELHVHDAVVT (130 aa). FAD contacts are provided by residues tyrosine 219 and 231-235; that span reads TSRLS. Interaction with DNA regions lie at residues 266 to 273 and 330 to 331; these read QLAWRDFH and NR. 361–363 is a binding site for FAD; that stretch reads DGD. Residue glutamine 392 participates in DNA binding.

Belongs to the DNA photolyase class-1 family. Monomer. It depends on FAD as a cofactor. The cofactor is coenzyme F420-(gamma-Glu)n.

It carries out the reaction cyclobutadipyrimidine (in DNA) = 2 pyrimidine residues (in DNA).. Involved in repair of UV radiation-induced DNA damage. Catalyzes the light-dependent monomerization (300-600 nm) of cyclobutyl pyrimidine dimers (in cis-syn configuration), which are formed between adjacent bases on the same DNA strand upon exposure to ultraviolet radiation. This is Deoxyribodipyrimidine photo-lyase (phr) from Streptomyces griseus.